A 59-amino-acid polypeptide reads, in one-letter code: Small ribosomal subunit protein bS21 (59 aa).

The segment at 39–59 (ETPVEKYKRKQRLKNRTKRRR) is disordered. The segment covering 45–59 (YKRKQRLKNRTKRRR) has biased composition (basic residues).

Belongs to the bacterial ribosomal protein bS21 family.

The chain is Small ribosomal subunit protein bS21 from Prochlorococcus marinus (strain SARG / CCMP1375 / SS120).